Here is a 120-residue protein sequence, read N- to C-terminus: Aspartate 1-decarboxylase (120 aa).

The active-site Schiff-base intermediate with substrate; via pyruvic acid is the serine 25. A Pyruvic acid (Ser) modification is found at serine 25. Threonine 57 serves as a coordination point for substrate. Tyrosine 58 acts as the Proton donor in catalysis. 73 to 75 contributes to the substrate binding site; it reads GAA.

This sequence belongs to the PanD family. Heterooctamer of four alpha and four beta subunits. Pyruvate serves as cofactor. In terms of processing, is synthesized initially as an inactive proenzyme, which is activated by self-cleavage at a specific serine bond to produce a beta-subunit with a hydroxyl group at its C-terminus and an alpha-subunit with a pyruvoyl group at its N-terminus.

It localises to the cytoplasm. It catalyses the reaction L-aspartate + H(+) = beta-alanine + CO2. It functions in the pathway cofactor biosynthesis; (R)-pantothenate biosynthesis; beta-alanine from L-aspartate: step 1/1. Its function is as follows. Catalyzes the pyruvoyl-dependent decarboxylation of aspartate to produce beta-alanine. In Deinococcus deserti (strain DSM 17065 / CIP 109153 / LMG 22923 / VCD115), this protein is Aspartate 1-decarboxylase.